The sequence spans 269 residues: Tryptophan synthase alpha chain (269 aa).

Active-site proton acceptor residues include Glu49 and Asp60.

The protein belongs to the TrpA family. In terms of assembly, tetramer of two alpha and two beta chains.

The enzyme catalyses (1S,2R)-1-C-(indol-3-yl)glycerol 3-phosphate + L-serine = D-glyceraldehyde 3-phosphate + L-tryptophan + H2O. It participates in amino-acid biosynthesis; L-tryptophan biosynthesis; L-tryptophan from chorismate: step 5/5. Functionally, the alpha subunit is responsible for the aldol cleavage of indoleglycerol phosphate to indole and glyceraldehyde 3-phosphate. This Pseudomonas putida (strain ATCC 47054 / DSM 6125 / CFBP 8728 / NCIMB 11950 / KT2440) protein is Tryptophan synthase alpha chain.